Consider the following 247-residue polypeptide: Probable transcriptional regulatory protein PBPRA1113 (247 aa).

The protein belongs to the TACO1 family.

The protein localises to the cytoplasm. In Photobacterium profundum (strain SS9), this protein is Probable transcriptional regulatory protein PBPRA1113.